The chain runs to 911 residues: Nitrate reductase [NADH] (911 aa).

Residues Met1–Tyr10 are compositionally biased toward polar residues. The interval Met1–Lys71 is disordered. Over residues Ser61–Lys71 the composition is skewed to acidic residues. Cys188 lines the Mo-molybdopterin pocket. The region spanning Ser536–Ile611 is the Cytochrome b5 heme-binding domain. 2 residues coordinate heme: His571 and His594. One can recognise an FAD-binding FR-type domain in the interval Arg654 to Gln766. FAD-binding positions include Arg706 to Thr709, Val723 to Tyr727, Phe728, Phe735, Gln740 to Ser742, and Thr793.

It belongs to the nitrate reductase family. In terms of assembly, homodimer. It depends on FAD as a cofactor. Requires heme as cofactor. The cofactor is Mo-molybdopterin.

The enzyme catalyses nitrite + NAD(+) + H2O = nitrate + NADH + H(+). Functionally, nitrate reductase is a key enzyme involved in the first step of nitrate assimilation in plants, fungi and bacteria. This chain is Nitrate reductase [NADH] (NIA), found in Solanum lycopersicum (Tomato).